A 329-amino-acid chain; its full sequence is Endo-beta-N-acetylglucosaminidase F3 (329 aa).

Residues 1-39 constitute a signal peptide (or 40, or 41); sequence MKKIFFAQCSILLLMLGSCSKMTEDMTPESVNKEASVKS. The GH18 domain maps to 48–329; it reads GVCIAYYITD…ANAVRDAVKN (282 aa). O-linked (Man...) threonine glycosylation occurs at Thr88. Glu167 acts as the Proton donor in catalysis.

Belongs to the glycosyl hydrolase 18 family. As to quaternary structure, monomer. Post-translationally, carbohydrate at Thr-88 consists of (2-OMe)Man1-4GlcNAcU1-4GlcU1-4Glc1-4(2-OMe)GlcU1-4[(2-OMe)Rham1-2]Man.

It is found in the secreted. The catalysed reaction is an N(4)-(oligosaccharide-(1-&gt;3)-[oligosaccharide-(1-&gt;6)]-beta-D-Man-(1-&gt;4)-beta-D-GlcNAc-(1-&gt;4)-alpha-D-GlcNAc)-L-asparaginyl-[protein] + H2O = an oligosaccharide-(1-&gt;3)-[oligosaccharide-(1-&gt;6)]-beta-D-Man-(1-&gt;4)-D-GlcNAc + N(4)-(N-acetyl-beta-D-glucosaminyl)-L-asparaginyl-[protein]. Functionally, endohydrolysis of the di-N-acetylchitobiosyl unit in high-mannose glycopeptides and glycoproteins. Hydrolyzes bi- and triantennary glycans. The presence of a core-bound fucose greatly augments endo F3 activity on biantennary and, presumably, triantennary oligosaccharides. This Elizabethkingia meningoseptica (Chryseobacterium meningosepticum) protein is Endo-beta-N-acetylglucosaminidase F3 (endOF3).